Consider the following 329-residue polypeptide: tRNA-modifying protein YgfZ (329 aa).

2 residues coordinate folate: Trp28 and Trp188.

This sequence belongs to the tRNA-modifying YgfZ family.

The protein localises to the cytoplasm. Its function is as follows. Folate-binding protein involved in regulating the level of ATP-DnaA and in the modification of some tRNAs. It is probably a key factor in regulatory networks that act via tRNA modification, such as initiation of chromosomal replication. The chain is tRNA-modifying protein YgfZ from Photorhabdus laumondii subsp. laumondii (strain DSM 15139 / CIP 105565 / TT01) (Photorhabdus luminescens subsp. laumondii).